The chain runs to 158 residues: Endoribonuclease YbeY (158 aa).

Zn(2+)-binding residues include His-119, His-123, and Asp-129.

This sequence belongs to the endoribonuclease YbeY family. Zn(2+) serves as cofactor.

The protein localises to the cytoplasm. Functionally, single strand-specific metallo-endoribonuclease involved in late-stage 70S ribosome quality control and in maturation of the 3' terminus of the 16S rRNA. In Chlamydia caviae (strain ATCC VR-813 / DSM 19441 / 03DC25 / GPIC) (Chlamydophila caviae), this protein is Endoribonuclease YbeY.